The following is a 22-amino-acid chain: Sex pheromone inhibitor determinant (22 aa).

Residues 1 to 14 (MSKRAMKKIIPLIT) constitute a propeptide that is removed on maturation.

The protein localises to the secreted. Its function is as follows. Acts as a competitive inhibitor of the CAD1 pheromone. The sequence is that of Sex pheromone inhibitor determinant (iad) from Enterococcus faecalis (strain ATCC 700802 / V583).